The following is a 146-amino-acid chain: Protein ADM2 (146 aa).

The signal sequence occupies residues 1–25 (MAQLLMVTVTFGCISLLYLLPGTLS). Positions 26–96 (GSLGKGLRPR…HPGPQRHVGS (71 aa)) are excised as a propeptide. Residues 29 to 99 (GKGLRPREPP…PQRHVGSRRP (71 aa)) form a disordered region. A disulfide bond links cysteine 108 and cysteine 113. Tyrosine 145 is modified (tyrosine amide).

Belongs to the adrenomedullin family. As to expression, expression was restricted to the intermediate and anterior lobes of the pituitary.

It is found in the secreted. Intermedin/ADM2 is a peptide hormone that plays a role as physiological regulator of gastrointestinal and cardiovascular bioactivities mediated by the CALCRL-RAMPs receptor complexes. Activates the cAMP-dependent pathway through interaction with CALCRL-RAMP3 receptor complex. This chain is Protein ADM2, found in Rattus norvegicus (Rat).